The sequence spans 261 residues: CD40 ligand (261 aa).

Residues 1–22 (MIETYSQPSPRSVAAGPPVSMK) are Cytoplasmic-facing. A helical; Signal-anchor for type II membrane protein membrane pass occupies residues 23-43 (IFMYLLTVFLITQMIGSALFA). At 44-240 (AYLHRRLDKI…LQPGASVFVN (197 aa)) the chain is on the extracellular side. One can recognise a THD domain in the interval 122-261 (IAAHVISEAS…GFTSFGLLKL (140 aa)). An intrachain disulfide couples cysteine 178 to cysteine 218. Asparagine 240 is a glycosylation site (N-linked (GlcNAc...) asparagine).

The protein belongs to the tumor necrosis factor family. As to quaternary structure, homotrimer. Interacts with CD28. CD40 ligand, soluble form: Exists as either a monomer or a homotrimer. Forms a ternary complex between CD40 and integrins for CD40-CD40LG signaling. In terms of processing, the soluble form derives from the membrane form by proteolytic processing.

It is found in the cell membrane. The protein resides in the cell surface. Its subcellular location is the secreted. Functionally, cytokine that acts as a ligand to CD40/TNFRSF5. Costimulates T-cell proliferation and cytokine production. Its cross-linking on T-cells generates a costimulatory signal which enhances the production of IL4 and IL10 in conjunction with the TCR/CD3 ligation and CD28 costimulation. Induces the activation of NF-kappa-B. Induces the activation of kinases MAPK8 and PAK2 in T-cells. Mediates B-cell proliferation in the absence of co-stimulus as well as IgE production in the presence of IL4. Involved in immunoglobulin class switching. Acts as a ligand for integrins, specifically ITGA5:ITGB1 and ITGAV:ITGB3; both integrins and the CD40 receptor are required for activation of CD40-CD40LG signaling, which have cell-type dependent effects, such as B-cell activation, NF-kappa-B signaling and anti-apoptotic signaling. This Sus scrofa (Pig) protein is CD40 ligand (CD40LG).